Here is a 38-residue protein sequence, read N- to C-terminus: MTQPNPNKQSVELNRTSLYWGLLLIFVLAVSFSNYFFN.

A helical membrane pass occupies residues 17-37 (SLYWGLLLIFVLAVSFSNYFF).

It belongs to the PsbL family. In terms of assembly, PSII is composed of 1 copy each of membrane proteins PsbA, PsbB, PsbC, PsbD, PsbE, PsbF, PsbH, PsbI, PsbJ, PsbK, PsbL, PsbM, PsbT, PsbX, PsbY, PsbZ, Psb30/Ycf12, at least 3 peripheral proteins of the oxygen-evolving complex and a large number of cofactors. It forms dimeric complexes.

The protein resides in the plastid membrane. Its function is as follows. One of the components of the core complex of photosystem II (PSII). PSII is a light-driven water:plastoquinone oxidoreductase that uses light energy to abstract electrons from H(2)O, generating O(2) and a proton gradient subsequently used for ATP formation. It consists of a core antenna complex that captures photons, and an electron transfer chain that converts photonic excitation into a charge separation. This subunit is found at the monomer-monomer interface and is required for correct PSII assembly and/or dimerization. The protein is Photosystem II reaction center protein L of Aneura mirabilis (Parasitic liverwort).